The sequence spans 102 residues: MNEQNLKHVIALLLEDAKRLQQIEPNAGTEARILLAKQALKTCGAQAPGRTEFMNFMANTLTPLPCNGEKVSRVYHDTMVKALRIELDGLRRKIVMNEIVTN.

This is an uncharacterized protein from Escherichia coli (strain K12).